A 304-amino-acid polypeptide reads, in one-letter code: HTH-type transcriptional regulator AdmX (304 aa).

Residues 1–58 (MKLRHLEIFYTVMTCGSLSRAAESLNISQPAASKSLKNAELKLGFKLFQRVRGKLLPS) enclose the HTH lysR-type domain. Positions 18-37 (LSRAAESLNISQPAASKSLK) form a DNA-binding region, H-T-H motif.

This sequence belongs to the LysR transcriptional regulatory family.

The protein localises to the cytoplasm. Its activity is regulated as follows. AdmX-mediated transcription is inhibited by indole-3-acetic and indole-3-pyruvic acids. AdmX recognizes and binds the auxin indole-3-acetic acid (IAA), which causes conformational changes in AdmX that result in the inhibition of the expression of the andrimid gene cluster and the suppression of antibiotic production. It also recognizes indole-3-pyruvic acid (IPA), an intermediate of the main IAA biosynthetic pathway in plants and plant beneficial bacteria, which also prevents andrimid synthesis, but to a much lesser extent. Functionally, positively regulates the biosynthesis of andrimid, a broad-spectrum antibiotic, by activating the expression of the adm biosynthetic gene cluster. It specifically binds to a region within the adm promoter. The chain is HTH-type transcriptional regulator AdmX from Serratia plymuthica.